The chain runs to 490 residues: MPRFAEQQLYIGGQYVAASSGQTFDSINPATGEVLAKVQRASQADVDRAVASAAEGQKVWAAMTAMQRSRILRRAVDILRERNDELAELETLDTGKPLSETRYVDIVTGADVLEYYAGLIPAIEGEQIPLRESSFVYTRREPLGVVAGIGAWNYPIQIALWKSAPALAAGNAMIFKPSEVTSLTALKLAEIYTEAGLPAGVFNVLTGSGREVGQWLTEHPGIEKVSFTGGTVTGKKVMASASSSSLKEVTMELGGKSPLIVFEDADLDRAADIAVMANFYSSGQVCTNGTRVFVPRMLQARFEAKVLERVKRIRLGDPLDDATNFGPLVSYAHMESVLGYIEKGRSEGARLLIGGTRVSDGDYAKGAYVAPTVFTDCRDDMTIVREEIFGPVMSILIYDSEEEVIRRANDTDYGLAAGVVTRDLNRAHRVIHKLEAGICWINTWGESPAEMPVGGYKQSGVGRENGLVTLGHYTRIKSVQVELGGYSSVF.

The K(+) site is built by Ser-26, Ile-27, and Asp-93. 150 to 152 (GAW) contacts NAD(+). Residue Lys-162 is the Charge relay system of the active site. Position 176–179 (176–179 (KPSE)) interacts with NAD(+). K(+) is bound at residue Val-180. Position 230–233 (230–233 (GTVT)) interacts with NAD(+). K(+) is bound at residue Leu-246. Glu-252 functions as the Proton acceptor in the catalytic mechanism. Gly-254, Cys-286, and Glu-387 together coordinate NAD(+). The active-site Nucleophile is the Cys-286. Cysteine sulfenic acid (-SOH) is present on Cys-286. Positions 457 and 460 each coordinate K(+). Glu-464 functions as the Charge relay system in the catalytic mechanism.

The protein belongs to the aldehyde dehydrogenase family. In terms of assembly, dimer of dimers. Requires K(+) as cofactor.

The catalysed reaction is betaine aldehyde + NAD(+) + H2O = glycine betaine + NADH + 2 H(+). It participates in amine and polyamine biosynthesis; betaine biosynthesis via choline pathway; betaine from betaine aldehyde: step 1/1. Its function is as follows. Involved in the biosynthesis of the osmoprotectant glycine betaine. Catalyzes the irreversible oxidation of betaine aldehyde to the corresponding acid. The chain is Betaine aldehyde dehydrogenase from Ectopseudomonas mendocina (strain ymp) (Pseudomonas mendocina).